A 512-amino-acid polypeptide reads, in one-letter code: D-alanine--D-alanyl carrier protein ligase (512 aa).

152-153 contacts ATP; that stretch reads TS. Residue Asp-199 coordinates D-alanine. 294–299 contacts ATP; sequence NAYGPT. Val-303 serves as a coordination point for D-alanine. Residues Asp-385, 397–400, and Lys-499 contribute to the ATP site; that span reads YGGR. Residue Lys-499 participates in D-alanine binding.

The protein belongs to the ATP-dependent AMP-binding enzyme family. DltA subfamily.

Its subcellular location is the cytoplasm. The enzyme catalyses holo-[D-alanyl-carrier protein] + D-alanine + ATP = D-alanyl-[D-alanyl-carrier protein] + AMP + diphosphate. It functions in the pathway cell wall biogenesis; lipoteichoic acid biosynthesis. In terms of biological role, catalyzes the first step in the D-alanylation of lipoteichoic acid (LTA), the activation of D-alanine and its transfer onto the D-alanyl carrier protein (Dcp) DltC. In an ATP-dependent two-step reaction, forms a high energy D-alanyl-AMP intermediate, followed by transfer of the D-alanyl residue as a thiol ester to the phosphopantheinyl prosthetic group of the Dcp. D-alanylation of LTA plays an important role in modulating the properties of the cell wall in Gram-positive bacteria, influencing the net charge of the cell wall. The protein is D-alanine--D-alanyl carrier protein ligase of Streptococcus pyogenes serotype M28 (strain MGAS6180).